The primary structure comprises 283 residues: uncharacterized protein (283 aa).

D121 is a catalytic residue.

This sequence belongs to the pseudouridine synthase RluA family.

The enzyme catalyses a uridine in RNA = a pseudouridine in RNA. This is an uncharacterized protein from Bacillus subtilis (strain 168).